Reading from the N-terminus, the 350-residue chain is tRNA uridine(34) hydroxylase (350 aa).

A Rhodanese domain is found at 146 to 240; sequence DDPDALFIDM…YARKAREQGL (95 aa). Catalysis depends on Cys-200, which acts as the Cysteine persulfide intermediate.

The protein belongs to the TrhO family.

It catalyses the reaction uridine(34) in tRNA + AH2 + O2 = 5-hydroxyuridine(34) in tRNA + A + H2O. Its function is as follows. Catalyzes oxygen-dependent 5-hydroxyuridine (ho5U) modification at position 34 in tRNAs. The chain is tRNA uridine(34) hydroxylase from Shigella sonnei (strain Ss046).